Reading from the N-terminus, the 78-residue chain is Large ribosomal subunit protein bL31 (78 aa).

Positions 16, 18, 38, and 41 each coordinate Zn(2+).

Belongs to the bacterial ribosomal protein bL31 family. Type A subfamily. In terms of assembly, part of the 50S ribosomal subunit. It depends on Zn(2+) as a cofactor.

Functionally, binds the 23S rRNA. This Parafrankia sp. (strain EAN1pec) protein is Large ribosomal subunit protein bL31.